A 332-amino-acid polypeptide reads, in one-letter code: MHTLGDIAKTINAKLVGDSNVEITGVASSLYANQTQLTYIINSKYKQTLIHSKAGVVILNKDLLRICPTNALVVDNVYLAFAKATHLFKKQNVCYQGIHPSAKINNAKIAPNCIIGRNVSIGNHCIIASNVVIEDNVTIGNYALIQPNVSILQGCSIGDNIVISPGVVIGSEGFGNAQDQQKHWHSIAHLGYVVIGNNVSIGANTTIDRGTIEDTQIHNGVRIDNLVHIAHNVIIEQDSAIAATVTIGGSCKLGKRCMVGGGATITSHVNLADDIIITGASTVDKNLSEQGHYTGFTSISKHQKWKKIQVWLLNLDKIVHYLNIKLKKLKEK.

The active-site Proton acceptor is H231.

This sequence belongs to the transferase hexapeptide repeat family. LpxD subfamily. In terms of assembly, homotrimer.

The enzyme catalyses a UDP-3-O-[(3R)-3-hydroxyacyl]-alpha-D-glucosamine + a (3R)-hydroxyacyl-[ACP] = a UDP-2-N,3-O-bis[(3R)-3-hydroxyacyl]-alpha-D-glucosamine + holo-[ACP] + H(+). Its pathway is bacterial outer membrane biogenesis; LPS lipid A biosynthesis. Its function is as follows. Catalyzes the N-acylation of UDP-3-O-acylglucosamine using 3-hydroxyacyl-ACP as the acyl donor. Is involved in the biosynthesis of lipid A, a phosphorylated glycolipid that anchors the lipopolysaccharide to the outer membrane of the cell. This chain is UDP-3-O-acylglucosamine N-acyltransferase, found in Vesicomyosocius okutanii subsp. Calyptogena okutanii (strain HA).